Here is a 392-residue protein sequence, read N- to C-terminus: Extracellular metalloproteinase 4 (392 aa).

Residues 1-9 constitute a propeptide that is removed on maturation; the sequence is VHSVVDYVS. N-linked (GlcNAc...) asparagine glycosylation is found at N27 and N176. H193 contributes to the Zn(2+) binding site. E194 is a catalytic residue. H197 lines the Zn(2+) pocket. N359 and N385 each carry an N-linked (GlcNAc...) asparagine glycan.

This sequence belongs to the peptidase M36 family. Zn(2+) is required as a cofactor.

Its subcellular location is the secreted. Secreted metalloproteinase probably acting as a virulence factor. In Trichophyton violaceum, this protein is Extracellular metalloproteinase 4 (MEP4).